Here is a 170-residue protein sequence, read N- to C-terminus: MDPLKLENYLTFRAIIRGSTLSPGFFRRWCFPALADVVGNIVVQEEGRFWQILPENHAFWGLLRRGFTVASFTEIITAAQLENERLSRQLAFLAFISFLLRNWPSDSLVPEADRLDLVCAPAWSRMQIWTQTARLINDLQDSVLEEQGSAEEEECEEALLAGDSDDPLFG.

Belongs to the adenoviridae E1B 19 kDa protein family.

In Canine adenovirus serotype 2 (CAdV-2), this protein is E1B protein, small T-antigen.